The sequence spans 423 residues: uncharacterized protein (423 aa).

This is an uncharacterized protein from Rhizobium meliloti (strain 1021) (Ensifer meliloti).